A 364-amino-acid chain; its full sequence is DNA replication and repair protein RecF (364 aa).

30–37 (GNNAQGKT) contacts ATP.

It belongs to the RecF family.

Its subcellular location is the cytoplasm. In terms of biological role, the RecF protein is involved in DNA metabolism; it is required for DNA replication and normal SOS inducibility. RecF binds preferentially to single-stranded, linear DNA. It also seems to bind ATP. The protein is DNA replication and repair protein RecF of Clostridium botulinum (strain 657 / Type Ba4).